Reading from the N-terminus, the 146-residue chain is Transcriptional regulator MraZ (146 aa).

2 SpoVT-AbrB domains span residues 9–55 and 81–124; these read ASAL…PRPA and AMDV…DVQR.

The protein belongs to the MraZ family. In terms of assembly, forms oligomers.

The protein localises to the cytoplasm. It localises to the nucleoid. This is Transcriptional regulator MraZ from Methylibium petroleiphilum (strain ATCC BAA-1232 / LMG 22953 / PM1).